Reading from the N-terminus, the 201-residue chain is Large ribosomal subunit protein uL4 (201 aa).

The tract at residues arginine 44–glycine 71 is disordered.

The protein belongs to the universal ribosomal protein uL4 family. Part of the 50S ribosomal subunit.

Functionally, one of the primary rRNA binding proteins, this protein initially binds near the 5'-end of the 23S rRNA. It is important during the early stages of 50S assembly. It makes multiple contacts with different domains of the 23S rRNA in the assembled 50S subunit and ribosome. In terms of biological role, forms part of the polypeptide exit tunnel. The protein is Large ribosomal subunit protein uL4 of Edwardsiella ictaluri (strain 93-146).